The sequence spans 578 residues: Isocitrate dehydrogenase kinase/phosphatase (578 aa).

ATP-binding positions include 315-321 (APGIRGM) and K336. Residue D371 is part of the active site.

It belongs to the AceK family.

It is found in the cytoplasm. The catalysed reaction is L-seryl-[isocitrate dehydrogenase] + ATP = O-phospho-L-seryl-[isocitrate dehydrogenase] + ADP + H(+). Its function is as follows. Bifunctional enzyme which can phosphorylate or dephosphorylate isocitrate dehydrogenase (IDH) on a specific serine residue. This is a regulatory mechanism which enables bacteria to bypass the Krebs cycle via the glyoxylate shunt in response to the source of carbon. When bacteria are grown on glucose, IDH is fully active and unphosphorylated, but when grown on acetate or ethanol, the activity of IDH declines drastically concomitant with its phosphorylation. The polypeptide is Isocitrate dehydrogenase kinase/phosphatase (Escherichia coli O17:K52:H18 (strain UMN026 / ExPEC)).